Here is a 268-residue protein sequence, read N- to C-terminus: MVSLTTCCLKNIVNQHACVENTVLLYHLGLRWNCKTLYQCTQCNGVNYTNSHSDQCKNKDLFLMKVIVKKNLAVTRTLLSWGASPEYARLFCRNTEEEQALNVQHVADVSSSKILERLTMSYKENDEQLLITFYLLNLSTKFSTNLREQVRFNIVSYIICDLAIHQTFKTFYAKNYSLSTLYCIFLAIYYKLYTALRKMVKIYPGLKRFAYLIGFMFDDETVMETYNSTDDEISECKNRIIAIKGYYGNIHCRSDIDHMYAFSQNDYW.

Residues 1 to 175 (MVSLTTCCLK…QTFKTFYAKN (175 aa)) lie on the Cytoplasmic side of the membrane. The helical transmembrane segment at 176–193 (YSLSTLYCIFLAIYYKLY) threads the bilayer. Residues 194 to 268 (TALRKMVKIY…MYAFSQNDYW (75 aa)) are Extracellular-facing. N-linked (GlcNAc...) asparagine; by host glycosylation occurs at asparagine 227.

This sequence belongs to the asfivirus MGF 300 family.

The protein resides in the host membrane. Plays a role in virus cell tropism, and may be required for efficient virus replication in macrophages. The chain is Protein MGF 300-1L from African swine fever virus (strain Badajoz 1971 Vero-adapted) (Ba71V).